A 411-amino-acid chain; its full sequence is Bestrophin homolog 26 (411 aa).

4 helical membrane passes run 30 to 50 (FTAI…FMVI), 73 to 93 (SHQE…SSVV), 235 to 255 (IPIP…YFAV), and 272 to 292 (TWIT…MGWM).

Belongs to the anion channel-forming bestrophin (TC 1.A.46) family. Calcium-sensitive chloride channel subfamily. In terms of assembly, forms oligomers.

It is found in the cell membrane. Functionally, forms chloride channels. This is Bestrophin homolog 26 (best-26) from Caenorhabditis elegans.